The following is a 361-amino-acid chain: Microtubule-associated protein Jupiter (361 aa).

Residues 1-15 (MISNYDITDSKSSSK) are compositionally biased toward polar residues. Disordered regions lie at residues 1–38 (MISN…TPRN) and 70–99 (IGDN…TPGK). Ser-24 carries the phosphoserine modification. Thr-35 is modified (phosphothreonine). The segment covering 73-87 (NPRRGQKPVDSHSRL) has biased composition (basic and acidic residues). Thr-96 is modified (phosphothreonine). At Ser-105 the chain carries Phosphoserine. 2 stretches are compositionally biased toward low complexity: residues 125–134 (GSSTANTTNG) and 141–154 (SGSV…VSSS). Disordered regions lie at residues 125-165 (GSST…SGSR) and 328-361 (GSTN…SGLW). Phosphoserine is present on residues Ser-143 and Ser-154. Over residues 155 to 165 (TENLKMNSGSR) the composition is skewed to polar residues.

It belongs to the MAP Jupiter family.

It is found in the nucleus. It localises to the cytoplasm. The protein localises to the cytoskeleton. The protein resides in the spindle. Binds to all microtubule populations. This chain is Microtubule-associated protein Jupiter, found in Drosophila persimilis (Fruit fly).